We begin with the raw amino-acid sequence, 84 residues long: Large ribosomal subunit protein bL27 (84 aa).

This sequence belongs to the bacterial ribosomal protein bL27 family.

In Campylobacter jejuni subsp. jejuni serotype O:6 (strain 81116 / NCTC 11828), this protein is Large ribosomal subunit protein bL27.